Here is a 510-residue protein sequence, read N- to C-terminus: MKLAYWMYAGPAHIGTLRVASSFKNVHAIMHAPLGDDYFNVMRSMLERERDFTPVTASIVDRHVLARGSQEKVIDNITRKDKEQRPDLIVLTPTCTSSILQEDLQNFVARASISSDSDVILADVNHYRVNELQAADRTLEQIVRYFLNKARRQGVLTRSLTDTPSANIIGIFTLGFHNQHDCRELKRLLQDLGIKVNQVIPEGGSVEHLQDLPKAWFNIVPYREVGLMTAKYLEREFGMPYLSTTPMGIVDTAEFIRQMEKYVNSFLSKEKVNYESYINYQTQFVSQAAWFSRSIDCQNLTGKKVVVFGDATHAASITKILVREMGIHVGCAGTYCKHDAEWFNEQVQGFCDEALITEDHTEVADTIARIEPSAIFGTQMERHIGKRLEIPCGVISSPVHIQNFPLGYRPFLGYEGTNQIADSVYNSFTLGMEDHLLDIFGGHDTKEVITKSLSTETDLTWNPESQRELNKIPGFVRGKIKRNTEKFARQEGITTITVDVMYAAKEALST.

Asp-36 lines the [4Fe-4S] cluster pocket. The Proton donor role is filled by Asp-296. 431–432 (GM) is a binding site for substrate.

The protein belongs to the ChlB/BchB/BchZ family. Protochlorophyllide reductase is composed of three subunits; ChlL, ChlN and ChlB. Forms a heterotetramer of two ChlB and two ChlN subunits. Requires [4Fe-4S] cluster as cofactor.

It is found in the plastid. Its subcellular location is the chloroplast. It catalyses the reaction chlorophyllide a + oxidized 2[4Fe-4S]-[ferredoxin] + 2 ADP + 2 phosphate = protochlorophyllide a + reduced 2[4Fe-4S]-[ferredoxin] + 2 ATP + 2 H2O. The protein operates within porphyrin-containing compound metabolism; chlorophyll biosynthesis (light-independent). Functionally, component of the dark-operative protochlorophyllide reductase (DPOR) that uses Mg-ATP and reduced ferredoxin to reduce ring D of protochlorophyllide (Pchlide) to form chlorophyllide a (Chlide). This reaction is light-independent. The NB-protein (ChlN-ChlB) is the catalytic component of the complex. In Angiopteris evecta (Mule's foot fern), this protein is Light-independent protochlorophyllide reductase subunit B.